The sequence spans 240 residues: DISARM protein DrmC (240 aa).

A PLD phosphodiesterase domain is found at 174–201; sequence GYSSLHAKVIMVDEEKAFVSSANLSYNG. Catalysis depends on residues histidine 179, lysine 181, and aspartate 186.

The protein belongs to the phospholipase D family.

It localises to the cytoplasm. Component of antiviral defense system DISARM (defense island system associated with restriction-modification), composed of DrmE, DrmA, DrmB, DrmC and DrmMII. DISARM is probably a multi-gene restriction module, this subunit is probably a phospholipase or nuclease. Expression of DISARM in B.subtilis (strain BEST7003) confers resistance to phages Nf, phi29, phi105, phi3T, SPO1, SPR and SPP1. Protection is over 10(7)-fold against phi3T, 10(4)-10(5)-fold against Nf, phi29, phi105 and SPR, 100-fold against SPO1 and 10-fold against SPP1. DISARM does not interfere with phage adsorption, but instead interferes with (phi3T) DNA replication early in its cycle, preventing replication, circularization and lysogeny and probably causes phage DNA degradation (DNA is degraded in SPP1-infected cells). This Bacillus paralicheniformis (strain ATCC 9945a / NCIMB 11709 / CD-2) protein is DISARM protein DrmC.